Here is a 115-residue protein sequence, read N- to C-terminus: MNMFIVLLVNISLASCLILIAFWLPQLNIYTEKANPYECGFDPMSSARLPFSMKFFLVAITFLLFDLEIALLLPLPWAIQMSNIKATMLTSFILVSVLAMGLAYEWLQKGLEWTE.

3 helical membrane-spanning segments follow: residues 4-24 (FIVLLVNISLASCLILIAFWL), 55-75 (FFLVAITFLLFDLEIALLLPL), and 87-107 (TMLTSFILVSVLAMGLAYEWL).

It belongs to the complex I subunit 3 family. As to quaternary structure, core subunit of respiratory chain NADH dehydrogenase (Complex I) which is composed of 45 different subunits. Interacts with TMEM186. Interacts with TMEM242.

It is found in the mitochondrion inner membrane. It carries out the reaction a ubiquinone + NADH + 5 H(+)(in) = a ubiquinol + NAD(+) + 4 H(+)(out). In terms of biological role, core subunit of the mitochondrial membrane respiratory chain NADH dehydrogenase (Complex I) which catalyzes electron transfer from NADH through the respiratory chain, using ubiquinone as an electron acceptor. Essential for the catalytic activity of complex I. This chain is NADH-ubiquinone oxidoreductase chain 3, found in Reithrodontomys megalotis (Western harvest mouse).